A 100-amino-acid polypeptide reads, in one-letter code: Cobalt transport protein CbiN (100 aa).

2 helical membrane-spanning segments follow: residues 8 to 28 (LSNW…LIFV) and 69 to 89 (LLFS…VGLY).

It belongs to the CbiN family. Forms an energy-coupling factor (ECF) transporter complex composed of an ATP-binding protein (A component, CbiO), a transmembrane protein (T component, CbiQ) and 2 possible substrate-capture proteins (S components, CbiM and CbiN) of unknown stoichimetry.

It is found in the cell inner membrane. Its pathway is cofactor biosynthesis; adenosylcobalamin biosynthesis. In terms of biological role, part of the energy-coupling factor (ECF) transporter complex CbiMNOQ involved in cobalt import. The polypeptide is Cobalt transport protein CbiN (Nostoc sp. (strain PCC 7120 / SAG 25.82 / UTEX 2576)).